A 434-amino-acid chain; its full sequence is Maltoporin (434 aa).

A signal peptide spans 1 to 25 (MKMKAKWLPIAAAVTAALASQAAFA).

It belongs to the porin LamB (TC 1.B.3) family. As to quaternary structure, homotrimer formed of three 18-stranded antiparallel beta-barrels, containing three independent channels.

It localises to the cell outer membrane. It carries out the reaction beta-maltose(in) = beta-maltose(out). Involved in the transport of maltose and maltodextrins. The chain is Maltoporin from Aeromonas hydrophila.